The chain runs to 427 residues: MLESLTLQPIALINGTVNLPGSKSVSNRALLLAALAEGTTRLHNLLDSDDIRHMLNALKSLGVNYRLSADRTQCDVDGLGGPLVADKTLELFLGNAGTAMRPLAAALCLGYSDIVLTGEERMKERPIGHLVDALEGGAQIDYLEQENYPPLRIRGGFRGGELTVDGSVSSQFLTALLMAAPLATQDTHIRIQGDLVSRPYIDITLHLMRSFGVEVTHQNYQVFHIQGGQTYHSPGEYLVEGDASSASYFLAAAAIKGGTVRVTGIGKKSVQGDTKFADVLEKMGAIIHWGDDYIECSRGELRDIDMDMNHIPDAAMTIATAALFAKGPTIIRNIYNWRVKETDRLSAMATELRKVGAEVEEGQDYIRVVPPAHLIAAEIGTYNDHRMAMCFSLVALSDTPVTILDPKCTAKTFPDYFEQLARLSVLA.

3-phosphoshikimate is bound by residues Lys-23, Ser-24, and Arg-28. Lys-23 contacts phosphoenolpyruvate. The phosphoenolpyruvate site is built by Gly-97 and Arg-125. 3-phosphoshikimate contacts are provided by Ser-169, Ser-170, Gln-171, Ser-197, Asp-313, Asn-336, and Lys-340. Gln-171 contributes to the phosphoenolpyruvate binding site. Asp-313 functions as the Proton acceptor in the catalytic mechanism. 3 residues coordinate phosphoenolpyruvate: Arg-344, Arg-386, and Lys-411.

Belongs to the EPSP synthase family. Monomer.

The protein resides in the cytoplasm. It carries out the reaction 3-phosphoshikimate + phosphoenolpyruvate = 5-O-(1-carboxyvinyl)-3-phosphoshikimate + phosphate. Its pathway is metabolic intermediate biosynthesis; chorismate biosynthesis; chorismate from D-erythrose 4-phosphate and phosphoenolpyruvate: step 6/7. Catalyzes the transfer of the enolpyruvyl moiety of phosphoenolpyruvate (PEP) to the 5-hydroxyl of shikimate-3-phosphate (S3P) to produce enolpyruvyl shikimate-3-phosphate and inorganic phosphate. The protein is 3-phosphoshikimate 1-carboxyvinyltransferase of Yersinia ruckeri.